Here is a 241-residue protein sequence, read N- to C-terminus: Large ribosomal subunit protein uL1 (241 aa).

The protein belongs to the universal ribosomal protein uL1 family. In terms of assembly, part of the 50S ribosomal subunit.

In terms of biological role, binds directly to 23S rRNA. The L1 stalk is quite mobile in the ribosome, and is involved in E site tRNA release. Its function is as follows. Protein L1 is also a translational repressor protein, it controls the translation of the L11 operon by binding to its mRNA. This Streptomyces coelicolor (strain ATCC BAA-471 / A3(2) / M145) protein is Large ribosomal subunit protein uL1.